Consider the following 338-residue polypeptide: DNA-directed RNA polymerase subunit alpha (338 aa).

The tract at residues 1-234 (MIHKNWAELI…DQLSIFVNFE (234 aa)) is alpha N-terminal domain (alpha-NTD). Residues 250 to 338 (FNPLLLKKVD…DLAKRFEDQF (89 aa)) are alpha C-terminal domain (alpha-CTD).

Belongs to the RNA polymerase alpha chain family. Homodimer. The RNAP catalytic core consists of 2 alpha, 1 beta, 1 beta' and 1 omega subunit. When a sigma factor is associated with the core the holoenzyme is formed, which can initiate transcription.

It catalyses the reaction RNA(n) + a ribonucleoside 5'-triphosphate = RNA(n+1) + diphosphate. Its function is as follows. DNA-dependent RNA polymerase catalyzes the transcription of DNA into RNA using the four ribonucleoside triphosphates as substrates. This Cereibacter sphaeroides (strain ATCC 17025 / ATH 2.4.3) (Rhodobacter sphaeroides) protein is DNA-directed RNA polymerase subunit alpha.